A 575-amino-acid chain; its full sequence is Chaperonin CPN60-2, mitochondrial (575 aa).

A mitochondrion-targeting transit peptide spans 1–32; that stretch reads MHRFASGLASKARLARKGANQIASRSSWSRNY.

The protein belongs to the chaperonin (HSP60) family.

It is found in the mitochondrion. In terms of biological role, implicated in mitochondrial protein import and macromolecular assembly. May facilitate the correct folding of imported proteins. May also prevent misfolding and promote the refolding and proper assembly of unfolded polypeptides generated under stress conditions in the mitochondrial matrix. This Cucurbita maxima (Pumpkin) protein is Chaperonin CPN60-2, mitochondrial (CPN60-2).